Here is a 423-residue protein sequence, read N- to C-terminus: Gamma-glutamyl phosphate reductase (423 aa).

The protein belongs to the gamma-glutamyl phosphate reductase family.

Its subcellular location is the cytoplasm. It carries out the reaction L-glutamate 5-semialdehyde + phosphate + NADP(+) = L-glutamyl 5-phosphate + NADPH + H(+). The protein operates within amino-acid biosynthesis; L-proline biosynthesis; L-glutamate 5-semialdehyde from L-glutamate: step 2/2. Functionally, catalyzes the NADPH-dependent reduction of L-glutamate 5-phosphate into L-glutamate 5-semialdehyde and phosphate. The product spontaneously undergoes cyclization to form 1-pyrroline-5-carboxylate. This is Gamma-glutamyl phosphate reductase from Pseudomonas entomophila (strain L48).